A 359-amino-acid chain; its full sequence is 4-hydroxy-3-methylbut-2-en-1-yl diphosphate synthase (flavodoxin) (359 aa).

[4Fe-4S] cluster contacts are provided by Cys-264, Cys-267, Cys-299, and Glu-306.

It belongs to the IspG family. The cofactor is [4Fe-4S] cluster.

The catalysed reaction is (2E)-4-hydroxy-3-methylbut-2-enyl diphosphate + oxidized [flavodoxin] + H2O + 2 H(+) = 2-C-methyl-D-erythritol 2,4-cyclic diphosphate + reduced [flavodoxin]. Its pathway is isoprenoid biosynthesis; isopentenyl diphosphate biosynthesis via DXP pathway; isopentenyl diphosphate from 1-deoxy-D-xylulose 5-phosphate: step 5/6. Functionally, converts 2C-methyl-D-erythritol 2,4-cyclodiphosphate (ME-2,4cPP) into 1-hydroxy-2-methyl-2-(E)-butenyl 4-diphosphate. The chain is 4-hydroxy-3-methylbut-2-en-1-yl diphosphate synthase (flavodoxin) from Mycoplasmoides gallisepticum (strain R(low / passage 15 / clone 2)) (Mycoplasma gallisepticum).